A 187-amino-acid polypeptide reads, in one-letter code: Ribosome-recycling factor (187 aa).

The protein belongs to the RRF family.

It localises to the cytoplasm. Functionally, responsible for the release of ribosomes from messenger RNA at the termination of protein biosynthesis. May increase the efficiency of translation by recycling ribosomes from one round of translation to another. The protein is Ribosome-recycling factor of Methylobacterium radiotolerans (strain ATCC 27329 / DSM 1819 / JCM 2831 / NBRC 15690 / NCIMB 10815 / 0-1).